The following is a 190-amino-acid chain: RING finger protein 227 (190 aa).

The RING-type zinc-finger motif lies at Cys18–Arg81. Residues Ala108–Gly147 form a disordered region. A compositionally biased stretch (acidic residues) spans Glu126 to Ala135.

In Mus musculus (Mouse), this protein is RING finger protein 227.